Reading from the N-terminus, the 395-residue chain is Phosphatidylinositol 4-phosphate 5-kinase-like protein 1 (395 aa).

The disordered stretch occupies residues 1–25 (MATPSLRSHEIPAHSQEAGNKSISS). The PIPK domain maps to 37–394 (ARQSRVGLFE…RLCRWAEVHT (358 aa)).

As to quaternary structure, interacts with type I phosphatidylinositol 4-phosphate 5-kinases, including PIP5K1A and PIP5K1B. Highly expressed in brain and testis, relatively to heart, spleen, lung, liver, skeletal muscle and kidney.

It localises to the cytoplasm. Its subcellular location is the membrane. In terms of biological role, may act as a scaffold to localize and regulate type I phosphatidylinositol 4-phosphate 5-kinases to specific compartments within the cell, where they generate PI(4,5)P2 for actin nucleation, signaling and scaffold protein recruitment and conversion to PI(3,4,5)P3. The sequence is that of Phosphatidylinositol 4-phosphate 5-kinase-like protein 1 (Pip5kl1) from Mus musculus (Mouse).